The chain runs to 329 residues: Flotillin-like protein FloA (329 aa).

2 helical membrane passes run phenylalanine 4–phenylalanine 24 and valine 27–glycine 47.

The protein belongs to the flotillin-like FloA family. Homooligomerizes.

It localises to the cell membrane. Its subcellular location is the membrane raft. Functionally, found in functional membrane microdomains (FMM) that may be equivalent to eukaryotic membrane rafts. FMMs are highly dynamic and increase in number as cells age. Flotillins are thought to be important factors in membrane fluidity. This is Flotillin-like protein FloA from Alkaliphilus metalliredigens (strain QYMF).